We begin with the raw amino-acid sequence, 360 residues long: Alanine racemase (360 aa).

Residue K33 is the Proton acceptor; specific for D-alanine of the active site. Position 33 is an N6-(pyridoxal phosphate)lysine (K33). R129 provides a ligand contact to substrate. Y253 acts as the Proton acceptor; specific for L-alanine in catalysis. M301 serves as a coordination point for substrate.

It belongs to the alanine racemase family. The cofactor is pyridoxal 5'-phosphate.

The catalysed reaction is L-alanine = D-alanine. Its pathway is amino-acid biosynthesis; D-alanine biosynthesis; D-alanine from L-alanine: step 1/1. Its function is as follows. Catalyzes the interconversion of L-alanine and D-alanine. May also act on other amino acids. The sequence is that of Alanine racemase (alr) from Xanthomonas campestris pv. campestris (strain 8004).